Here is a 400-residue protein sequence, read N- to C-terminus: MKEKTIIIVGGGQAAAMAAASLRQQGFTGELHLFSDERHLPYERPPLSKSMLLEDSPQLQQVLPANWWQENNVHLHSGVTIKTLGRDTRELVLTNGESWHWDQLFIAIGAAARPLPLLDALGERCFTLRHAGDAARLREVLQPERSVVIVGAGTIGLELAASATQRRCKVTVIELAATVMGRNAPPPVQRYLLQRHQQAGVRILLNNAIEHVVDGEKVELTLQSGETLQADVVIYGIGISANEQLAREANLDTANGIVIDEACRTCDPAIFAGGDVAITRLDNGALHRCESWENANNQAQIAAAAMLGLPLPLLPPPWFWSDQYSDNLQFIGDMRGDDWLCRGNPETQKAIWFNLQNGVLIGAVTLNQGREIRPIRKWIQSGKTFDAKLLIDENIALKSL.

5 to 36 (TIIIVGGGQAAAMAAASLRQQGFTGELHLFSD) is a binding site for FAD. 146-174 (SVVIVGAGTIGLELAASATQRRCKVTVIE) serves as a coordination point for NAD(+).

Belongs to the bacterial ring-hydroxylating dioxygenase ferredoxin reductase family. As to quaternary structure, this dioxygenase system consists of four proteins: the two subunits of the hydroxylase component (HcaE and HcaF), a ferredoxin (HcaC) and a ferredoxin reductase (HcaD). FAD serves as cofactor.

It carries out the reaction 2 reduced [2Fe-2S]-[ferredoxin] + NAD(+) + H(+) = 2 oxidized [2Fe-2S]-[ferredoxin] + NADH. Its pathway is aromatic compound metabolism; 3-phenylpropanoate degradation. In terms of biological role, part of the multicomponent 3-phenylpropionate dioxygenase, that converts 3-phenylpropionic acid (PP) and cinnamic acid (CI) into 3-phenylpropionate-dihydrodiol (PP-dihydrodiol) and cinnamic acid-dihydrodiol (CI-dihydrodiol), respectively. This chain is 3-phenylpropionate/cinnamic acid dioxygenase ferredoxin--NAD(+) reductase component, found in Shigella sonnei (strain Ss046).